We begin with the raw amino-acid sequence, 341 residues long: Phosphate acyltransferase (341 aa).

This sequence belongs to the PlsX family. Homodimer. Probably interacts with PlsY.

It localises to the cytoplasm. It carries out the reaction a fatty acyl-[ACP] + phosphate = an acyl phosphate + holo-[ACP]. It functions in the pathway lipid metabolism; phospholipid metabolism. Functionally, catalyzes the reversible formation of acyl-phosphate (acyl-PO(4)) from acyl-[acyl-carrier-protein] (acyl-ACP). This enzyme utilizes acyl-ACP as fatty acyl donor, but not acyl-CoA. The polypeptide is Phosphate acyltransferase (Aliivibrio salmonicida (strain LFI1238) (Vibrio salmonicida (strain LFI1238))).